We begin with the raw amino-acid sequence, 244 residues long: ATP synthase subunit 4, mitochondrial (244 aa).

The transit peptide at 1–36 (MSSKLFCLRSFPSVQRTAWQRLVLPSTRKFSLTPTT) directs the protein to the mitochondrion.

It belongs to the eukaryotic ATPase B chain family. In terms of assembly, F-type ATPases have 2 components, CF(1) - the catalytic core - and CF(0) - the membrane proton channel. In yeast, the dimeric form of ATP synthase consists of 17 polypeptides: alpha, beta, gamma, delta, epsilon, 4 (B), 5 (OSCP), 6 (A), 8, 9 (C), d, E (Tim11), f, g, h, i/j and k.

The protein localises to the mitochondrion. It is found in the mitochondrion inner membrane. Its function is as follows. Mitochondrial membrane ATP synthase (F(1)F(0) ATP synthase or Complex V) produces ATP from ADP in the presence of a proton gradient across the membrane which is generated by electron transport complexes of the respiratory chain. F-type ATPases consist of two structural domains, F(1) - containing the extramembraneous catalytic core, and F(0) - containing the membrane proton channel, linked together by a central stalk and a peripheral stalk. During catalysis, ATP synthesis in the catalytic domain of F(1) is coupled via a rotary mechanism of the central stalk subunits to proton translocation. Part of the complex F(0) domain and the peripheric stalk, which acts as a stator to hold the catalytic alpha(3)beta(3) subcomplex and subunit a/ATP6 static relative to the rotary elements. The sequence is that of ATP synthase subunit 4, mitochondrial (atp4) from Schizosaccharomyces pombe (strain 972 / ATCC 24843) (Fission yeast).